A 262-amino-acid chain; its full sequence is Nitrate transport protein NasD (262 aa).

The ABC transporter domain maps to 5–239; that stretch reads IQVQGVSQRF…RPRNRVQLAD (235 aa). 41 to 48 is an ATP binding site; the sequence is GHSGCGKS.

The protein belongs to the ABC transporter superfamily.

The protein localises to the cell membrane. In terms of biological role, probably part of a high-affinity binding-protein-dependent transport system for nitrate. Probably responsible for energy coupling to the transport system. This is Nitrate transport protein NasD (nasD) from Klebsiella oxytoca.